The following is a 280-amino-acid chain: Mastin (280 aa).

The signal sequence occupies residues 1 to 15 (MLWLLVLTAPWLGGS). The propeptide occupies 16–30 (VPISPDPGLRHEQVG). In terms of domain architecture, Peptidase S1 spans 31 to 275 (IVGGCKVPAR…YVSWIHQHIP (245 aa)). The cysteines at positions 62 and 78 are disulfide-linked. Residue His77 is the Charge relay system of the active site. Residues Asn106 and Asn117 are each glycosylated (N-linked (GlcNAc...) asparagine). Residue Asp127 is the Charge relay system of the active site. 3 cysteine pairs are disulfide-bonded: Cys161–Cys234, Cys194–Cys215, and Cys224–Cys252. The active-site Charge relay system is Ser228.

This sequence belongs to the peptidase S1 family. Oligomer; disulfide-linked. Post-translationally, N-glycosylated. Mononuclear cells within skin, intestine, trachea and lung parenchyma, and polymorphonuclear leukocytes within capillaries and blood.

The protein localises to the cytoplasm. Its activity is regulated as follows. Inhibited by leupeptin and bis(5-amidino-2-benzimidazolyl)methane (BABIM). In terms of biological role, trypsin-like serine protease. Has a preference for extended substrates with basic residues at the P1 position; Arg is preferred over Lys. Active towards calcitonin gene-related peptide and gelatin. Not active towards substance P, vasoactive intestinal peptide, type I collagen or azocasein. The protein is Mastin of Canis lupus familiaris (Dog).